The following is a 377-amino-acid chain: MLKRASFVEVNSASLRHNFSAVKSIVPKDAHIMAVVKANAYGAGAIKASEIFLQEGANYLGVAALDEALELRSHFPKTPILILGYSPNANASMLIDNDLSAMVFSLEQAEVFSQMALKSQKRLKVHLKIDTGMHRLGLEPNFKSIETIKKIRALKGLEIEGIFTHLSNADAKIKTHAKNQMKAFNAFLEQLLDQKIEFQYRHAYNSAGILSLCNGNENRLLNLYRPGIMLYGFYPSNGMKESCPTILKNVISLKAQIVQIRSVKKGEFIGYGEHFYTNEETLVGVLALGYADGLMRALGNRIQVAINNQLAPLIGKVCMDQCFVKLNDIQAKEGDEVILFGDKSARANDASEIAALLNTIAYETISTLSKRLERVYI.

Catalysis depends on Lys-37, which acts as the Proton acceptor; specific for D-alanine. Residue Lys-37 is modified to N6-(pyridoxal phosphate)lysine. Arg-135 is a substrate binding site. The active-site Proton acceptor; specific for L-alanine is Tyr-271. Met-319 lines the substrate pocket.

It belongs to the alanine racemase family. The cofactor is pyridoxal 5'-phosphate.

It catalyses the reaction L-alanine = D-alanine. It participates in amino-acid biosynthesis; D-alanine biosynthesis; D-alanine from L-alanine: step 1/1. Its function is as follows. Catalyzes the interconversion of L-alanine and D-alanine. May also act on other amino acids. This Helicobacter pylori (strain HPAG1) protein is Alanine racemase (alr).